A 386-amino-acid polypeptide reads, in one-letter code: Protein phosphatase methylesterase 1 (386 aa).

Residues 1-38 (MSALEKSMHLGRLPSRPPLPGSGGSQSGAKMRMGPGRK) form a disordered region. A Phosphoserine modification is found at Ser-15. At Arg-16 the chain carries Asymmetric dimethylarginine; alternate. Arg-16 is modified (omega-N-methylarginine; alternate). Residue Ser-156 is part of the active site. Over residues 255–265 (IEEEEEDEEGS) the composition is skewed to acidic residues. The segment at 255-280 (IEEEEEDEEGSESVNKRKKEDDMETK) is disordered. A compositionally biased stretch (basic and acidic residues) spans 268–280 (VNKRKKEDDMETK). The active site involves His-349.

It belongs to the AB hydrolase superfamily. Binds PPP2CA and PPP2CB. Phosphorylated by SIK1 following increases in intracellular sodium, leading to dissociation from the protein phosphatase 2A (PP2A) complex and subsequent dephosphorylation of sodium/potassium-transporting ATPase ATP1A1.

The enzyme catalyses [phosphatase 2A protein]-C-terminal L-leucine methyl ester + H2O = [phosphatase 2A protein]-C-terminal L-leucine + methanol + H(+). Functionally, demethylates proteins that have been reversibly carboxymethylated. Demethylates PPP2CB (in vitro) and PPP2CA. Binding to PPP2CA displaces the manganese ion and inactivates the enzyme. The sequence is that of Protein phosphatase methylesterase 1 (Ppme1) from Rattus norvegicus (Rat).